Consider the following 388-residue polypeptide: Chorismate synthase (388 aa).

2 residues coordinate NADP(+): R39 and R45. FMN is bound by residues 130–132, 251–252, G296, 311–315, and R337; these read RSS, NA, and KPIPT.

Belongs to the chorismate synthase family. As to quaternary structure, homotetramer. FMNH2 is required as a cofactor.

It catalyses the reaction 5-O-(1-carboxyvinyl)-3-phosphoshikimate = chorismate + phosphate. The protein operates within metabolic intermediate biosynthesis; chorismate biosynthesis; chorismate from D-erythrose 4-phosphate and phosphoenolpyruvate: step 7/7. Catalyzes the anti-1,4-elimination of the C-3 phosphate and the C-6 proR hydrogen from 5-enolpyruvylshikimate-3-phosphate (EPSP) to yield chorismate, which is the branch point compound that serves as the starting substrate for the three terminal pathways of aromatic amino acid biosynthesis. This reaction introduces a second double bond into the aromatic ring system. This is Chorismate synthase from Streptococcus thermophilus (strain CNRZ 1066).